Here is a 156-residue protein sequence, read N- to C-terminus: Small ribosomal subunit protein uS7 (156 aa).

This sequence belongs to the universal ribosomal protein uS7 family. In terms of assembly, part of the 30S ribosomal subunit. Contacts proteins S9 and S11.

One of the primary rRNA binding proteins, it binds directly to 16S rRNA where it nucleates assembly of the head domain of the 30S subunit. Is located at the subunit interface close to the decoding center, probably blocks exit of the E-site tRNA. This is Small ribosomal subunit protein uS7 from Salinispora arenicola (strain CNS-205).